The primary structure comprises 175 residues: ATP synthase subunit delta (175 aa).

This sequence belongs to the ATPase delta chain family. In terms of assembly, F-type ATPases have 2 components, F(1) - the catalytic core - and F(0) - the membrane proton channel. F(1) has five subunits: alpha(3), beta(3), gamma(1), delta(1), epsilon(1). F(0) has three main subunits: a(1), b(2) and c(10-14). The alpha and beta chains form an alternating ring which encloses part of the gamma chain. F(1) is attached to F(0) by a central stalk formed by the gamma and epsilon chains, while a peripheral stalk is formed by the delta and b chains.

The protein localises to the cell inner membrane. Its function is as follows. F(1)F(0) ATP synthase produces ATP from ADP in the presence of a proton or sodium gradient. F-type ATPases consist of two structural domains, F(1) containing the extramembraneous catalytic core and F(0) containing the membrane proton channel, linked together by a central stalk and a peripheral stalk. During catalysis, ATP synthesis in the catalytic domain of F(1) is coupled via a rotary mechanism of the central stalk subunits to proton translocation. In terms of biological role, this protein is part of the stalk that links CF(0) to CF(1). It either transmits conformational changes from CF(0) to CF(1) or is implicated in proton conduction. This chain is ATP synthase subunit delta, found in Stenotrophomonas maltophilia (strain R551-3).